The chain runs to 186 residues: Probable nicotinate-nucleotide adenylyltransferase (186 aa).

Belongs to the NadD family.

The catalysed reaction is nicotinate beta-D-ribonucleotide + ATP + H(+) = deamido-NAD(+) + diphosphate. The protein operates within cofactor biosynthesis; NAD(+) biosynthesis; deamido-NAD(+) from nicotinate D-ribonucleotide: step 1/1. Its function is as follows. Catalyzes the reversible adenylation of nicotinate mononucleotide (NaMN) to nicotinic acid adenine dinucleotide (NaAD). The polypeptide is Probable nicotinate-nucleotide adenylyltransferase (Tropheryma whipplei (strain Twist) (Whipple's bacillus)).